The chain runs to 493 residues: Angiopoietin-related protein 2 (493 aa).

Positions 1–19 (MRPLCMTYWWLGLLATVGA) are cleaved as a signal peptide. Coiled-coil stretches lie at residues 77-115 (EVHL…VDGG) and 152-202 (ALEL…QLEE). N-linked (GlcNAc...) asparagine glycosylation is found at Asn164 and Asn192. The region spanning 269–489 (DKPSGPWRDC…KVVMMIRPNP (221 aa)) is the Fibrinogen C-terminal domain. 2 cysteine pairs are disulfide-bonded: Cys278/Cys307 and Cys430/Cys443.

Widely expressed in heart, tongue, lung and skeletal muscle. Also found in lower levels in kidney, epididymis and testis.

Its subcellular location is the secreted. Its function is as follows. Induces sprouting in endothelial cells through an autocrine and paracrine action. This chain is Angiopoietin-related protein 2 (Angptl2), found in Mus musculus (Mouse).